The following is a 309-amino-acid chain: Homoserine kinase (309 aa).

91-101 (PIGSGLGSSAC) lines the ATP pocket.

The protein belongs to the GHMP kinase family. Homoserine kinase subfamily.

Its subcellular location is the cytoplasm. The catalysed reaction is L-homoserine + ATP = O-phospho-L-homoserine + ADP + H(+). It participates in amino-acid biosynthesis; L-threonine biosynthesis; L-threonine from L-aspartate: step 4/5. Functionally, catalyzes the ATP-dependent phosphorylation of L-homoserine to L-homoserine phosphate. The protein is Homoserine kinase of Salmonella arizonae (strain ATCC BAA-731 / CDC346-86 / RSK2980).